The sequence spans 256 residues: Non-specific lipid transfer protein GPI-anchored 23 (256 aa).

The signal sequence occupies residues 1–21 (MKPSFVLLSIVLLLSSSLSDA). An N-linked (GlcNAc...) asparagine glycan is attached at Asn-41. 4 disulfide bridges follow: Cys-45–Cys-88, Cys-55–Cys-72, Cys-73–Cys-113, and Cys-86–Cys-121. Residues 125 to 230 (TPAASTPVSP…SPSPSPSPSI (106 aa)) form a disordered region. Low complexity predominate over residues 138–230 (SPTTSPSSAK…SPSPSPSPSI (93 aa)). A lipid anchor (GPI-anchor amidated serine) is attached at Ser-225. Residues 226–256 (PSPSISSSGILLVSKLFIAVVMVSSFLYILA) constitute a propeptide, removed in mature form.

The protein belongs to the plant LTP family. As to expression, confined to the anthers of the inflorescence.

The protein resides in the cell membrane. In terms of biological role, probable lipid transfer protein. The protein is Non-specific lipid transfer protein GPI-anchored 23 of Arabidopsis thaliana (Mouse-ear cress).